The chain runs to 108 residues: Large ribosomal subunit protein uL23 (108 aa).

Belongs to the universal ribosomal protein uL23 family. In terms of assembly, part of the 50S ribosomal subunit. Contacts protein L29, and trigger factor when it is bound to the ribosome.

One of the early assembly proteins it binds 23S rRNA. One of the proteins that surrounds the polypeptide exit tunnel on the outside of the ribosome. Forms the main docking site for trigger factor binding to the ribosome. This is Large ribosomal subunit protein uL23 from Polaromonas naphthalenivorans (strain CJ2).